The chain runs to 446 residues: Glutamine synthetase (446 aa).

The region spanning glutamate 18–glycine 103 is the GS beta-grasp domain. In terms of domain architecture, GS catalytic spans proline 110–tyrosine 446. Residues glutamate 134 and glutamate 136 each contribute to the Mg(2+) site. ATP is bound at residue glutamate 186. The Mg(2+) site is built by glutamate 191 and glutamate 198. L-glutamate contacts are provided by residues asparagine 242–glycine 243 and glycine 243. Histidine 247 provides a ligand contact to Mg(2+). ATP is bound at residue serine 251. L-glutamate is bound by residues arginine 300, glutamate 306, and arginine 318. 2 residues coordinate ATP: arginine 318 and arginine 323. Glutamate 335 provides a ligand contact to Mg(2+). Residue arginine 337 coordinates L-glutamate.

The protein belongs to the glutamine synthetase family. In terms of assembly, oligomer of 12 subunits arranged in the form of two hexagons. In its feedback-inhibited form, interacts with TnrA in order to block its DNA-binding activity. The cofactor is Mg(2+).

The protein localises to the cytoplasm. The enzyme catalyses L-glutamate + NH4(+) + ATP = L-glutamine + ADP + phosphate + H(+). With respect to regulation, inhibited by glutamine. Its function is as follows. Glutamine synthetase (GS) is an unusual multitasking protein that functions as an enzyme, a transcription coregulator, and a chaperone in ammonium assimilation and in the regulation of genes involved in nitrogen metabolism. It catalyzes the ATP-dependent biosynthesis of glutamine from glutamate and ammonia. Feedback-inhibited GlnA also interacts with and regulates the activity of the transcriptional regulator TnrA. During nitrogen limitation, TnrA is in its DNA-binding active state and turns on the transcription of genes required for nitrogen assimilation. Under conditions of nitrogen excess, feedback-inhibited GlnA forms a stable complex with TnrA, which inhibits its DNA-binding activity. In contrast, feedback-inhibited GlnA acts as a chaperone to stabilize the DNA-binding activity of GlnR, which represses the transcription of nitrogen assimilation genes. In Staphylococcus aureus (strain MRSA252), this protein is Glutamine synthetase.